A 406-amino-acid chain; its full sequence is Argininosuccinate synthase (406 aa).

An ATP-binding site is contributed by 8–16 (AYSGGLDTS). L-citrulline is bound at residue Tyr-86. ATP is bound at residue Gly-116. Positions 118, 122, and 123 each coordinate L-aspartate. Asn-122 contacts L-citrulline. Positions 126, 174, 183, 259, and 271 each coordinate L-citrulline.

This sequence belongs to the argininosuccinate synthase family. Type 1 subfamily. Homotetramer.

It localises to the cytoplasm. It carries out the reaction L-citrulline + L-aspartate + ATP = 2-(N(omega)-L-arginino)succinate + AMP + diphosphate + H(+). The protein operates within amino-acid biosynthesis; L-arginine biosynthesis; L-arginine from L-ornithine and carbamoyl phosphate: step 2/3. This chain is Argininosuccinate synthase, found in Dehalococcoides mccartyi (strain ATCC BAA-2266 / KCTC 15142 / 195) (Dehalococcoides ethenogenes (strain 195)).